We begin with the raw amino-acid sequence, 653 residues long: MEPSGSEQLFEDPDPGGKSQDAEARKQTESEQKLSKMTHNALENINVIGQGLKHLFQHQRRRSSVSPHDVQQIQADPEPEMDLESQNACAEIDGVPTHPTALNRVLQQIRVPPKMKRGTSLHSRRGKPEAPKGSPQINRKSGQEMTAVMQSGRPRSSSTTDAPTSSAMMEIACAAAAAAAACLPGEEGTAERIERLEVSSLAQTSSAVASSTDGSIHTDSVDGTPDPQRTKAAIAHLQQKILKLTEQIKIAQTARDDNVAEYLKLANSADKQQAARIKQVFEKKNQKSAQTILQLQKKLEHYHRKLREVEQNGIPRQPKDVFRDMHQGLKDVGAKVTGFSEGVVDSVKGGFSSFSQATHSAAGAVVSKPREIASLIRNKFGSADNIPNLKDSLEEGQVDDAGKALGVISNFQSSPKYGSEEDCSSATSGSVGANSTTGGIAVGASSSKTNTLDMQSSGFDALLHEIQEIRETQARLEESFETLKEHYQRDYSLIMQTLQEERYRCERLEEQLNDLTELHQNEILNLKQELASMEEKIAYQSYERARDIQEALEACQTRISKMELQQQQQQVVQLEGLENATARNLLGKLINILLAVMAVLLVFVSTVANCVVPLMKTRNRTFSTLFLVVFIAFLWKHWDALFSYVERFFSSPR.

Residue Met1 is modified to N-acetylmethionine. Disordered stretches follow at residues 1 to 35 (MEPS…QKLS), 58 to 78 (HQRR…ADPE), 112 to 165 (PPKM…APTS), and 204 to 227 (TSSA…TPDP). Residues 1 to 591 (MEPSGSEQLF…ARNLLGKLIN (591 aa)) are Cytoplasmic-facing. Basic and acidic residues predominate over residues 20–34 (QDAEARKQTESEQKL). A compositionally biased stretch (polar residues) spans 64 to 74 (SVSPHDVQQIQ). Residues 113 to 125 (PKMKRGTSLHSRR) show a composition bias toward basic residues. Residues 135 to 144 (PQINRKSGQE) are compositionally biased toward polar residues. The segment covering 153 to 165 (RPRSSSTTDAPTS) has biased composition (low complexity). Residues 204-218 (TSSAVASSTDGSIHT) show a composition bias toward polar residues. Positions 228 to 313 (QRTKAAIAHL…RKLREVEQNG (86 aa)) form a coiled coil. A phosphoserine mark is found at Ser382 and Ser414. The disordered stretch occupies residues 415–437 (PKYGSEEDCSSATSGSVGANSTT). Residues 424-437 (SSATSGSVGANSTT) show a composition bias toward polar residues. Residues 458–576 (GFDALLHEIQ…QQQQVVQLEG (119 aa)) are a coiled coil. The next 2 helical transmembrane spans lie at 592–612 (ILLA…NCVV) and 625–645 (LFLV…FSYV). At 646–653 (ERFFSSPR) the chain is on the cytoplasmic side.

Belongs to the TEX28 family. In terms of assembly, may form homodimers and heterodimers with TMCC2 or TMCC3 via the coiled-coil domains. Interacts with ribosomal proteins RPL4 and RPS6.

It localises to the endoplasmic reticulum membrane. Endoplasmic reticulum membrane protein that promotes endoplasmic reticulum-associated endosome fission. Localizes to contact sites between the endoplasmic reticulum and endosomes and acts by promoting recruitment of the endoplasmic reticulum to endosome tubules for fission. Endosome membrane fission of early and late endosomes is essential to separate regions destined for lysosomal degradation from carriers to be recycled to the plasma membrane. This Homo sapiens (Human) protein is Transmembrane and coiled-coil domains protein 1.